The primary structure comprises 167 residues: Large ribosomal subunit protein uL10 (167 aa).

The protein belongs to the universal ribosomal protein uL10 family. In terms of assembly, part of the ribosomal stalk of the 50S ribosomal subunit. The N-terminus interacts with L11 and the large rRNA to form the base of the stalk. The C-terminus forms an elongated spine to which L12 dimers bind in a sequential fashion forming a multimeric L10(L12)X complex.

Its function is as follows. Forms part of the ribosomal stalk, playing a central role in the interaction of the ribosome with GTP-bound translation factors. In Alkaliphilus oremlandii (strain OhILAs) (Clostridium oremlandii (strain OhILAs)), this protein is Large ribosomal subunit protein uL10.